A 193-amino-acid chain; its full sequence is Fra a 1-associated protein (193 aa).

Residues 1–27 are disordered; it reads MGWVWKDDDEQGGHVNPSAADISPRLD.

Interacts with FRAA1E, FRAA2 and FRAA3.

The protein is Fra a 1-associated protein of Fragaria ananassa (Strawberry).